A 368-amino-acid chain; its full sequence is Peptide chain release factor 2 (368 aa).

Residue Gln245 is modified to N5-methylglutamine.

The protein belongs to the prokaryotic/mitochondrial release factor family. In terms of processing, methylated by PrmC. Methylation increases the termination efficiency of RF2.

It localises to the cytoplasm. Peptide chain release factor 2 directs the termination of translation in response to the peptide chain termination codons UGA and UAA. This Treponema pallidum (strain Nichols) protein is Peptide chain release factor 2 (prfB).